The chain runs to 515 residues: Protein pid-4 (515 aa).

Positions 496–515 (DRSPQKFKFPASGSYMKPAN) are disordered.

In terms of assembly, may interact with pid-2, app-1 and prmt-5.

It is found in the cytoplasm. The protein resides in the perinuclear region. It localises to the P-body. Functionally, together with pid-5, it is involved in gene silencing mediated by a class of 21 nucleotide PIWI-interacting RNAs (piRNAs) that possess a uracil residue at the 5'-end (also called 21U-RNAs) and guide the Piwi protein prg-1 to its DNA targets for silencing. Together with pid-5, it is required for the biogenesis of secondary and tertiary 22G-siRNAs. Specifically, promotes the production of 22G-siRNAs from the 5' end of target mRNAs. Together with pid-5, plays a role in small RNA-directed transgenerational epigenetic inheritance (also called RNAe) over several generations and germline immortality. Together with pid-5, plays a role in the formation of liquid-like condensates in the cytoplasm called Z granules. This is Protein pid-4 from Caenorhabditis elegans.